A 510-amino-acid polypeptide reads, in one-letter code: Probable cytosol aminopeptidase (510 aa).

2 residues coordinate Mn(2+): lysine 282 and aspartate 287. Lysine 294 is an active-site residue. The Mn(2+) site is built by aspartate 305, aspartate 364, and glutamate 366. Residue arginine 368 is part of the active site.

It belongs to the peptidase M17 family. Mn(2+) is required as a cofactor.

It localises to the cytoplasm. It catalyses the reaction Release of an N-terminal amino acid, Xaa-|-Yaa-, in which Xaa is preferably Leu, but may be other amino acids including Pro although not Arg or Lys, and Yaa may be Pro. Amino acid amides and methyl esters are also readily hydrolyzed, but rates on arylamides are exceedingly low.. The catalysed reaction is Release of an N-terminal amino acid, preferentially leucine, but not glutamic or aspartic acids.. Presumably involved in the processing and regular turnover of intracellular proteins. Catalyzes the removal of unsubstituted N-terminal amino acids from various peptides. The chain is Probable cytosol aminopeptidase from Cupriavidus pinatubonensis (strain JMP 134 / LMG 1197) (Cupriavidus necator (strain JMP 134)).